The sequence spans 506 residues: Chorion-specific transcription factor GCMb (506 aa).

A DNA-binding region (GCM) is located at residues 19 to 174; it reads LSWDINDPQM…KSETEARRSA (156 aa). Cys-81, Cys-87, Cys-91, Cys-118, Cys-121, Cys-130, His-157, and His-159 together coordinate Zn(2+). Over residues 155 to 172 the composition is skewed to basic and acidic residues; that stretch reads GVHDHPRPESKSETEARR. The tract at residues 155 to 213 is disordered; sequence GVHDHPRPESKSETEARRSAIKRQMASFYQPQKKRIRESEAEENQDSSGHFSNIPPLEN. The C-terminal conserved inhibitory domain (CCID) stretch occupies residues 379-395; that stretch reads LQTVITTTTKVSYQAYQ.

Its subcellular location is the nucleus. Its function is as follows. Transcription factor that binds specific sequences on gene promoters and activate their transcription. Through the regulation of gene transcription, may play a role in parathyroid gland development. The protein is Chorion-specific transcription factor GCMb of Homo sapiens (Human).